Here is a 387-residue protein sequence, read N- to C-terminus: Phosphoglycerate kinase (387 aa).

Substrate is bound by residues 21-23 (DLN), arginine 36, and 59-62 (HLGR). N6-acetyllysine is present on lysine 84. Arginine 113 and arginine 146 together coordinate substrate. Residues lysine 197, glutamate 314, and 340–343 (GGDT) each bind ATP.

The protein belongs to the phosphoglycerate kinase family. Monomer.

It localises to the cytoplasm. It catalyses the reaction (2R)-3-phosphoglycerate + ATP = (2R)-3-phospho-glyceroyl phosphate + ADP. The protein operates within carbohydrate degradation; glycolysis; pyruvate from D-glyceraldehyde 3-phosphate: step 2/5. The polypeptide is Phosphoglycerate kinase (Shigella sonnei (strain Ss046)).